The primary structure comprises 618 residues: 1-deoxy-D-xylulose-5-phosphate synthase (618 aa).

Residues histidine 76 and 117–119 (GHS) each bind thiamine diphosphate. Aspartate 148 is a Mg(2+) binding site. Thiamine diphosphate-binding positions include 149–150 (GA), asparagine 177, tyrosine 284, and glutamate 366. Asparagine 177 serves as a coordination point for Mg(2+).

This sequence belongs to the transketolase family. DXPS subfamily. As to quaternary structure, homodimer. Mg(2+) is required as a cofactor. It depends on thiamine diphosphate as a cofactor.

It catalyses the reaction D-glyceraldehyde 3-phosphate + pyruvate + H(+) = 1-deoxy-D-xylulose 5-phosphate + CO2. It participates in metabolic intermediate biosynthesis; 1-deoxy-D-xylulose 5-phosphate biosynthesis; 1-deoxy-D-xylulose 5-phosphate from D-glyceraldehyde 3-phosphate and pyruvate: step 1/1. Its function is as follows. Catalyzes the acyloin condensation reaction between C atoms 2 and 3 of pyruvate and glyceraldehyde 3-phosphate to yield 1-deoxy-D-xylulose-5-phosphate (DXP). The chain is 1-deoxy-D-xylulose-5-phosphate synthase from Dechloromonas aromatica (strain RCB).